The primary structure comprises 86 residues: Defensin-like protein 259 (86 aa).

Positions 1–25 (MKNASLKLPLLIFILVITSNLGAEA) are cleaved as a signal peptide. Intrachain disulfides connect C60/C76, C66/C83, and C70/C85.

This sequence belongs to the DEFL family.

Its subcellular location is the secreted. The sequence is that of Defensin-like protein 259 from Arabidopsis thaliana (Mouse-ear cress).